The chain runs to 390 residues: MLRYLTAGESHGPALITIVEGLPAGLAVEAGYVDRQLARRQGGYGRGKRMAIEQDRVRILSGVRGGLTLGSPVCLQIENRDWENWSTTMAPGPEADTGDRVVTRPRPGHADLAGVLKYGHKDVRNVLERASARETAARVAAGSLARRLLEELGVEILGLVVRIGPVQARIPEVPLDALRARIAESRVMCPDPYAGLSMVEEIDRARDDGDSLGGVFELHAFGVPPGLGSYVQWDRRLDGRLAGALMSIQAVKGVEIGLGFEGAAQRGSEVQDEIFHNGEKGFYRTSNRAGGIEGGVSNGQPVVVRVAMKPIPTLRRPLASVDLVSLTPSEAAFERSDICAVPAACVIGEAVLAFELARACLEKFGGDSMTELLDNHRRYLERIRANRAGG.

The NADP(+) site is built by Arg40 and Arg46. FMN contacts are provided by residues 129-131 (RAS), 249-250 (QA), Gly294, 309-313 (KPIPT), and Arg335.

Belongs to the chorismate synthase family. In terms of assembly, homotetramer. FMNH2 is required as a cofactor.

It carries out the reaction 5-O-(1-carboxyvinyl)-3-phosphoshikimate = chorismate + phosphate. It functions in the pathway metabolic intermediate biosynthesis; chorismate biosynthesis; chorismate from D-erythrose 4-phosphate and phosphoenolpyruvate: step 7/7. In terms of biological role, catalyzes the anti-1,4-elimination of the C-3 phosphate and the C-6 proR hydrogen from 5-enolpyruvylshikimate-3-phosphate (EPSP) to yield chorismate, which is the branch point compound that serves as the starting substrate for the three terminal pathways of aromatic amino acid biosynthesis. This reaction introduces a second double bond into the aromatic ring system. The polypeptide is Chorismate synthase (Desulforudis audaxviator (strain MP104C)).